The primary structure comprises 876 residues: Alanine--tRNA ligase (876 aa).

Zn(2+) contacts are provided by His566, His570, Cys668, and His672.

The protein belongs to the class-II aminoacyl-tRNA synthetase family. Requires Zn(2+) as cofactor.

It is found in the cytoplasm. The catalysed reaction is tRNA(Ala) + L-alanine + ATP = L-alanyl-tRNA(Ala) + AMP + diphosphate. Catalyzes the attachment of alanine to tRNA(Ala) in a two-step reaction: alanine is first activated by ATP to form Ala-AMP and then transferred to the acceptor end of tRNA(Ala). Also edits incorrectly charged Ser-tRNA(Ala) and Gly-tRNA(Ala) via its editing domain. The protein is Alanine--tRNA ligase of Petrotoga mobilis (strain DSM 10674 / SJ95).